A 464-amino-acid chain; its full sequence is NADH-quinone oxidoreductase subunit N 2 (464 aa).

14 consecutive transmembrane segments (helical) span residues 12-32 (VGIIFLIILELFLPSFDLIGF), 33-53 (LGFLISFISGVLAIKYSLAGY), 62-82 (INAFSLLLKGVMYILTSFVIF), 93-113 (TFVENVYTFLLISLGLSIMVS), 117-137 (LAVILAGLELASISMYISVGM), 152-172 (LVLGSMTTAFFGIGSAFYIGA), 189-209 (FALASLFLFVAFALKVSAAPF), 227-247 (FISTVPKIGFYAVLFLLASYI), 254-274 (FSYIVGIVGVISMFWGNLVAY), 282-304 (MLAYSSIGHAGYFLIGFSRYNPL), 310-330 (IFYVIVYAFATAGAFLVLSIL), 351-371 (PFLATALALFLFALIGIPPFA), 400-420 (IIAAGYYLKLIVYMFFKEPAT), and 434-454 (IGISAFLIIVFFFGIFPNILF).

Belongs to the complex I subunit 2 family. As to quaternary structure, NDH-1 is composed of 14 different subunits. Subunits NuoA, H, J, K, L, M, N constitute the membrane sector of the complex.

The protein localises to the cell inner membrane. The enzyme catalyses a quinone + NADH + 5 H(+)(in) = a quinol + NAD(+) + 4 H(+)(out). Functionally, NDH-1 shuttles electrons from NADH, via FMN and iron-sulfur (Fe-S) centers, to quinones in the respiratory chain. The immediate electron acceptor for the enzyme in this species is believed to be ubiquinone. Couples the redox reaction to proton translocation (for every two electrons transferred, four hydrogen ions are translocated across the cytoplasmic membrane), and thus conserves the redox energy in a proton gradient. This chain is NADH-quinone oxidoreductase subunit N 2, found in Hydrogenobaculum sp. (strain Y04AAS1).